The primary structure comprises 288 residues: ATP phosphoribosyltransferase (288 aa).

Belongs to the ATP phosphoribosyltransferase family. Long subfamily. Requires Mg(2+) as cofactor.

It is found in the cytoplasm. It carries out the reaction 1-(5-phospho-beta-D-ribosyl)-ATP + diphosphate = 5-phospho-alpha-D-ribose 1-diphosphate + ATP. Its pathway is amino-acid biosynthesis; L-histidine biosynthesis; L-histidine from 5-phospho-alpha-D-ribose 1-diphosphate: step 1/9. Feedback inhibited by histidine. Its function is as follows. Catalyzes the condensation of ATP and 5-phosphoribose 1-diphosphate to form N'-(5'-phosphoribosyl)-ATP (PR-ATP). Has a crucial role in the pathway because the rate of histidine biosynthesis seems to be controlled primarily by regulation of HisG enzymatic activity. This chain is ATP phosphoribosyltransferase, found in Methanococcus maripaludis (strain C6 / ATCC BAA-1332).